Consider the following 204-residue polypeptide: Pre-mRNA leakage protein 1 (204 aa).

The FHA domain maps to 104 to 172 (YLVGRELGHS…NGTCLNNVVI (69 aa)).

Belongs to the pre-mRNA retention and splicing (RES) complex composed of at least BUD13, IST3 and PML1.

Its subcellular location is the cytoplasm. The protein localises to the nucleus. Required for efficient splicing and pre-mRNA nuclear retention. This chain is Pre-mRNA leakage protein 1 (PML1), found in Saccharomyces cerevisiae (strain ATCC 204508 / S288c) (Baker's yeast).